The sequence spans 56 residues: Repressor-like protein SSo7c4 (56 aa).

Residues 4 to 51 (EEIVKVSRNYQVTIPAKVRQKFQIKEGDLVKVTFDESGGVVKIQLLDS) enclose the SpoVT-AbrB domain.

This Saccharolobus solfataricus (strain ATCC 35092 / DSM 1617 / JCM 11322 / P2) (Sulfolobus solfataricus) protein is Repressor-like protein SSo7c4.